The chain runs to 515 residues: 2-isopropylmalate synthase (515 aa).

Positions 4-266 (ISVFDTTLRD…ETGLILKEIK (263 aa)) constitute a Pyruvate carboxyltransferase domain. Residues aspartate 13, histidine 201, histidine 203, and asparagine 237 each coordinate Mn(2+). The tract at residues 391–515 (ELQTLQVNYG…AEVYGSKVEV (125 aa)) is regulatory domain.

This sequence belongs to the alpha-IPM synthase/homocitrate synthase family. LeuA type 1 subfamily. In terms of assembly, homodimer. Requires Mn(2+) as cofactor.

The protein localises to the cytoplasm. It catalyses the reaction 3-methyl-2-oxobutanoate + acetyl-CoA + H2O = (2S)-2-isopropylmalate + CoA + H(+). Its pathway is amino-acid biosynthesis; L-leucine biosynthesis; L-leucine from 3-methyl-2-oxobutanoate: step 1/4. Its function is as follows. Catalyzes the condensation of the acetyl group of acetyl-CoA with 3-methyl-2-oxobutanoate (2-ketoisovalerate) to form 3-carboxy-3-hydroxy-4-methylpentanoate (2-isopropylmalate). This is 2-isopropylmalate synthase from Halalkalibacterium halodurans (strain ATCC BAA-125 / DSM 18197 / FERM 7344 / JCM 9153 / C-125) (Bacillus halodurans).